The primary structure comprises 507 residues: Transcription factor CP2 (507 aa).

Residues 61-300 form the Grh/CP2 DB domain; it reads ENKILPFQYV…SPGFNSSHNS (240 aa). The interval 133–395 is DNA-binding; it reads EHQQLEGWRW…LFNALKGRMV (263 aa). Disordered stretches follow at residues 240 to 268 and 296 to 316; these read PKGA…YQPS and SSHN…QPEP. The span at 241-265 shows a compositional bias: basic and acidic residues; sequence KGADRKQKTDREKMEKRTPQEKEKY.

Belongs to the grh/CP2 family. CP2 subfamily. As to quaternary structure, component of the SSP (stage selector protein) complex, which appears to be a heteromer of TFCP2 and 2 copies of NFE4.

It localises to the nucleus. Its function is as follows. May function as a transcription factor. The protein is Transcription factor CP2 (tfcp2) of Xenopus tropicalis (Western clawed frog).